A 338-amino-acid chain; its full sequence is Large ribosomal subunit protein uL10 (338 aa).

The tract at residues 297 to 338 (PSAQQTQTQQSTAEEKKEEKKEEEKKGPSEEEIGSGLASLFG) is disordered. Residues 298-308 (SAQQTQTQQST) show a composition bias toward low complexity. The segment covering 309 to 325 (AEEKKEEKKEEEKKGPS) has biased composition (basic and acidic residues).

It belongs to the universal ribosomal protein uL10 family. In terms of assembly, part of the 50S ribosomal subunit. Forms part of the ribosomal stalk which helps the ribosome interact with GTP-bound translation factors. Forms a heptameric L10(L12)2(L12)2(L12)2 complex, where L10 forms an elongated spine to which the L12 dimers bind in a sequential fashion.

Its function is as follows. Forms part of the ribosomal stalk, playing a central role in the interaction of the ribosome with GTP-bound translation factors. The polypeptide is Large ribosomal subunit protein uL10 (Saccharolobus islandicus (strain Y.N.15.51 / Yellowstone #2) (Sulfolobus islandicus)).